Consider the following 68-residue polypeptide: Large ribosomal subunit protein bL31 (68 aa).

C17, C19, C37, and C40 together coordinate Zn(2+).

The protein belongs to the bacterial ribosomal protein bL31 family. Type A subfamily. As to quaternary structure, part of the 50S ribosomal subunit. The cofactor is Zn(2+).

Functionally, binds the 23S rRNA. In Dehalococcoides mccartyi (strain ATCC BAA-2266 / KCTC 15142 / 195) (Dehalococcoides ethenogenes (strain 195)), this protein is Large ribosomal subunit protein bL31.